A 588-amino-acid polypeptide reads, in one-letter code: Aspartate--tRNA ligase (588 aa).

Glutamate 177 contacts L-aspartate. Residues 201–204 form an aspartate region; the sequence is QLFK. An L-aspartate-binding site is contributed by arginine 223. Residues 223–225 and glutamine 232 contribute to the ATP site; that span reads RDE. Histidine 451 contacts L-aspartate. Glutamate 485 is a binding site for ATP. Arginine 492 provides a ligand contact to L-aspartate. Position 537–540 (537–540) interacts with ATP; it reads GLDR.

Belongs to the class-II aminoacyl-tRNA synthetase family. Type 1 subfamily. Homodimer.

The protein resides in the cytoplasm. The enzyme catalyses tRNA(Asp) + L-aspartate + ATP = L-aspartyl-tRNA(Asp) + AMP + diphosphate. In terms of biological role, catalyzes the attachment of L-aspartate to tRNA(Asp) in a two-step reaction: L-aspartate is first activated by ATP to form Asp-AMP and then transferred to the acceptor end of tRNA(Asp). The chain is Aspartate--tRNA ligase from Staphylococcus haemolyticus (strain JCSC1435).